The primary structure comprises 507 residues: ATP synthase subunit alpha, chloroplastic (507 aa).

170 to 177 (GDRQTGKT) contacts ATP. A Phosphothreonine modification is found at Thr257.

It belongs to the ATPase alpha/beta chains family. F-type ATPases have 2 components, CF(1) - the catalytic core - and CF(0) - the membrane proton channel. CF(1) has five subunits: alpha(3), beta(3), gamma(1), delta(1), epsilon(1). CF(0) has four main subunits: a, b, b' and c.

It is found in the plastid. It localises to the chloroplast thylakoid membrane. It carries out the reaction ATP + H2O + 4 H(+)(in) = ADP + phosphate + 5 H(+)(out). In terms of biological role, produces ATP from ADP in the presence of a proton gradient across the membrane. The alpha chain is a regulatory subunit. The protein is ATP synthase subunit alpha, chloroplastic of Lobularia maritima (Sweet alyssum).